The primary structure comprises 203 residues: Small ribosomal subunit protein uS4c (203 aa).

Residues 15–43 (LGSLPGLTSKRPRSGSDLRNQSRSGKRSQ) form a disordered region. The S4 RNA-binding domain occupies 89–169 (MRLDNILFRL…LPKHLTLHSL (81 aa)).

It belongs to the universal ribosomal protein uS4 family. Part of the 30S ribosomal subunit. Contacts protein S5. The interaction surface between S4 and S5 is involved in control of translational fidelity.

It localises to the plastid. The protein resides in the chloroplast. Functionally, one of the primary rRNA binding proteins, it binds directly to 16S rRNA where it nucleates assembly of the body of the 30S subunit. In terms of biological role, with S5 and S12 plays an important role in translational accuracy. This Illicium oligandrum (Star anise) protein is Small ribosomal subunit protein uS4c (rps4).